The primary structure comprises 443 residues: Glutamyl-tRNA reductase (443 aa).

Substrate contacts are provided by residues 55-58 (TCNR), serine 113, 118-120 (EPQ), and glutamine 124. Cysteine 56 functions as the Nucleophile in the catalytic mechanism. Residue 193–198 (GAGEMI) participates in NADP(+) binding.

It belongs to the glutamyl-tRNA reductase family. Homodimer.

The catalysed reaction is (S)-4-amino-5-oxopentanoate + tRNA(Glu) + NADP(+) = L-glutamyl-tRNA(Glu) + NADPH + H(+). Its pathway is porphyrin-containing compound metabolism; protoporphyrin-IX biosynthesis; 5-aminolevulinate from L-glutamyl-tRNA(Glu): step 1/2. The protein operates within porphyrin-containing compound metabolism; chlorophyll biosynthesis. In terms of biological role, catalyzes the NADPH-dependent reduction of glutamyl-tRNA(Glu) to glutamate 1-semialdehyde (GSA). The sequence is that of Glutamyl-tRNA reductase from Methylibium petroleiphilum (strain ATCC BAA-1232 / LMG 22953 / PM1).